Reading from the N-terminus, the 117-residue chain is Large ribosomal subunit protein bL19 (117 aa).

Belongs to the bacterial ribosomal protein bL19 family.

Functionally, this protein is located at the 30S-50S ribosomal subunit interface and may play a role in the structure and function of the aminoacyl-tRNA binding site. The polypeptide is Large ribosomal subunit protein bL19 (Shewanella sediminis (strain HAW-EB3)).